The primary structure comprises 120 residues: Ribonuclease P protein component (120 aa).

Belongs to the RnpA family. Consists of a catalytic RNA component (M1 or rnpB) and a protein subunit.

It carries out the reaction Endonucleolytic cleavage of RNA, removing 5'-extranucleotides from tRNA precursor.. RNaseP catalyzes the removal of the 5'-leader sequence from pre-tRNA to produce the mature 5'-terminus. It can also cleave other RNA substrates such as 4.5S RNA. The protein component plays an auxiliary but essential role in vivo by binding to the 5'-leader sequence and broadening the substrate specificity of the ribozyme. The sequence is that of Ribonuclease P protein component from Microcystis aeruginosa (strain NIES-843 / IAM M-2473).